The sequence spans 358 residues: Protein RecA (358 aa).

Residue Gly-78 to Thr-85 participates in ATP binding.

This sequence belongs to the RecA family.

The protein resides in the cytoplasm. Functionally, can catalyze the hydrolysis of ATP in the presence of single-stranded DNA, the ATP-dependent uptake of single-stranded DNA by duplex DNA, and the ATP-dependent hybridization of homologous single-stranded DNAs. It interacts with LexA causing its activation and leading to its autocatalytic cleavage. The protein is Protein RecA of Deinococcus geothermalis (strain DSM 11300 / CIP 105573 / AG-3a).